The sequence spans 279 residues: 2-dehydro-3-deoxyphosphooctonate aldolase (279 aa).

This sequence belongs to the KdsA family.

It localises to the cytoplasm. It catalyses the reaction D-arabinose 5-phosphate + phosphoenolpyruvate + H2O = 3-deoxy-alpha-D-manno-2-octulosonate-8-phosphate + phosphate. The protein operates within carbohydrate biosynthesis; 3-deoxy-D-manno-octulosonate biosynthesis; 3-deoxy-D-manno-octulosonate from D-ribulose 5-phosphate: step 2/3. It functions in the pathway bacterial outer membrane biogenesis; lipopolysaccharide biosynthesis. The chain is 2-dehydro-3-deoxyphosphooctonate aldolase from Bartonella henselae (strain ATCC 49882 / DSM 28221 / CCUG 30454 / Houston 1) (Rochalimaea henselae).